Here is a 153-residue protein sequence, read N- to C-terminus: D-aminoacyl-tRNA deacylase (153 aa).

Positions 137–138 match the Gly-cisPro motif, important for rejection of L-amino acids motif; it reads GP.

It belongs to the DTD family. In terms of assembly, homodimer.

It is found in the cytoplasm. It catalyses the reaction glycyl-tRNA(Ala) + H2O = tRNA(Ala) + glycine + H(+). The enzyme catalyses a D-aminoacyl-tRNA + H2O = a tRNA + a D-alpha-amino acid + H(+). Its function is as follows. An aminoacyl-tRNA editing enzyme that deacylates mischarged D-aminoacyl-tRNAs. Also deacylates mischarged glycyl-tRNA(Ala), protecting cells against glycine mischarging by AlaRS. Acts via tRNA-based rather than protein-based catalysis; rejects L-amino acids rather than detecting D-amino acids in the active site. By recycling D-aminoacyl-tRNA to D-amino acids and free tRNA molecules, this enzyme counteracts the toxicity associated with the formation of D-aminoacyl-tRNA entities in vivo and helps enforce protein L-homochirality. This is D-aminoacyl-tRNA deacylase from Dehalococcoides mccartyi (strain ATCC BAA-2100 / JCM 16839 / KCTC 5957 / BAV1).